A 284-amino-acid polypeptide reads, in one-letter code: uncharacterized protein (284 aa).

An N-terminal signal peptide occupies residues 1 to 23 (MKRGCAIAVMICGLITSVSAASA).

It belongs to the surface antigen msp4 family.

This is an uncharacterized protein from Brucella suis biovar 1 (strain 1330).